The following is a 1109-amino-acid chain: RNA2 polyprotein (1109 aa).

It belongs to the nepoviruses RNA2 polyprotein family. In terms of processing, specific enzymatic cleavages in vivo by the P1 encoded 3C-like protease yield mature proteins.

The protein resides in the host cell junction. Its subcellular location is the host plasmodesma. It localises to the host cytoplasm. It is found in the host nucleus. The protein localises to the virion. Functionally, implicated in RNA2 replication. Could also be required for nematode transmission of the virus. In terms of biological role, transports viral genome to neighboring plant cells directly through plasmosdesmata, without any budding. The movement protein allows efficient cell to cell propagation, by bypassing the host cell wall barrier. Acts by forming a tubular structure at the host plasmodesmata, enlarging it enough to allow free passage of virion capsids. The sequence is that of RNA2 polyprotein from Vitis rupestris (Grape).